We begin with the raw amino-acid sequence, 208 residues long: Glycerol-3-phosphate acyltransferase (208 aa).

A run of 5 helical transmembrane segments spans residues 3-23 (ILLAALVAYLIGSVSFAVVVS), 51-71 (KAAILTLVGDAFKGWIAVWLA), 78-98 (DVAIAWVAIAVFLGHLYPVFF), 115-135 (AVHPVLGLATALTWLIVAFFF), and 140-160 (LAALVAAVFAPVFDVFLFGMP).

Belongs to the PlsY family. Probably interacts with PlsX.

The protein localises to the cell inner membrane. The enzyme catalyses an acyl phosphate + sn-glycerol 3-phosphate = a 1-acyl-sn-glycero-3-phosphate + phosphate. Its pathway is lipid metabolism; phospholipid metabolism. In terms of biological role, catalyzes the transfer of an acyl group from acyl-phosphate (acyl-PO(4)) to glycerol-3-phosphate (G3P) to form lysophosphatidic acid (LPA). This enzyme utilizes acyl-phosphate as fatty acyl donor, but not acyl-CoA or acyl-ACP. The polypeptide is Glycerol-3-phosphate acyltransferase (Burkholderia orbicola (strain MC0-3)).